A 536-amino-acid chain; its full sequence is Membrane protein insertase YidC (536 aa).

Transmembrane regions (helical) follow at residues 7 to 27 (FFIF…QSQS), 338 to 358 (LLST…LITF), 419 to 439 (LPVF…IGSV), 453 to 473 (LSDQ…MFFI), and 494 to 514 (PFIF…YYIV).

Belongs to the OXA1/ALB3/YidC family. Type 1 subfamily. Interacts with the Sec translocase complex via SecD. Specifically interacts with transmembrane segments of nascent integral membrane proteins during membrane integration.

It localises to the cell membrane. Required for the insertion and/or proper folding and/or complex formation of integral membrane proteins into the membrane. Involved in integration of membrane proteins that insert both dependently and independently of the Sec translocase complex, as well as at least some lipoproteins. Aids folding of multispanning membrane proteins. The polypeptide is Membrane protein insertase YidC (Buchnera aphidicola subsp. Schizaphis graminum (strain Sg)).